A 365-amino-acid chain; its full sequence is Aminomethyltransferase (365 aa).

It belongs to the GcvT family. As to quaternary structure, the glycine cleavage system is composed of four proteins: P, T, L and H.

It catalyses the reaction N(6)-[(R)-S(8)-aminomethyldihydrolipoyl]-L-lysyl-[protein] + (6S)-5,6,7,8-tetrahydrofolate = N(6)-[(R)-dihydrolipoyl]-L-lysyl-[protein] + (6R)-5,10-methylene-5,6,7,8-tetrahydrofolate + NH4(+). Its function is as follows. The glycine cleavage system catalyzes the degradation of glycine. The chain is Aminomethyltransferase from Serratia proteamaculans (strain 568).